Here is a 613-residue protein sequence, read N- to C-terminus: TANK-binding kinase 1-binding protein 1 (613 aa).

A homodimerization region spans residues 1-280 (MESMFEDDIS…QDLASNQSEC (280 aa)). Residues 48–162 (YGDIKERLGG…ALVETHLRQI (115 aa)) adopt a coiled-coil conformation. S184 carries the post-translational modification Phosphoserine. A coiled-coil region spans residues 218–277 (TSVSVSELERRRLEEALEAAQGEARGAQLREEQLQAECERLQGELKQLQETRAQDLASNQ). Residues 281 to 330 (GMAWVKRVGDDQVNLALAYTELTEELGRLRELSSLQGRILRTLLQEQARN) are interaction with TBK1 and IKBKE. The tract at residues 328-457 (ARNAGQRHSP…HHAKAGFQGR (130 aa)) is disordered. Positions 346 to 361 (PACPSPSPPARPPPCA) are enriched in pro residues. Residues 362–372 (PCQSPAAQRRS) are compositionally biased toward low complexity. S365, S372, S379, S385, S400, and S415 each carry phosphoserine. A compositionally biased stretch (pro residues) spans 389–406 (PSCPSPVPQRRSPVPPSC). Pro residues predominate over residues 416-433 (PVPPSCPAPQPRPPPPPG). 2 positions are modified to phosphoserine: S502 and S532. The UBZ1-type zinc finger occupies 581-607 (IRSCPLCQLGFPVGYPDDALIKHIDSH). Residues C584, C587, H603, and H607 each coordinate Zn(2+).

As to quaternary structure, homodimer. May form a heterodimer with NAP1. Interacts with TKB1 and IKBKE. Weakly interacts with DDX3X.

Functionally, adapter protein which constitutively binds TBK1 and IKBKE playing a role in antiviral innate immunity. Essential for the efficient induction of IRF-dependent transcription following infection with Sendai virus. This Rattus norvegicus (Rat) protein is TANK-binding kinase 1-binding protein 1.